The primary structure comprises 184 residues: Ribose 1,5-bisphosphate phosphokinase PhnN (184 aa).

11-18 is a binding site for ATP; the sequence is GPSGAGKD.

It belongs to the ribose 1,5-bisphosphokinase family.

The enzyme catalyses alpha-D-ribose 1,5-bisphosphate + ATP = 5-phospho-alpha-D-ribose 1-diphosphate + ADP. The protein operates within metabolic intermediate biosynthesis; 5-phospho-alpha-D-ribose 1-diphosphate biosynthesis; 5-phospho-alpha-D-ribose 1-diphosphate from D-ribose 5-phosphate (route II): step 3/3. Its function is as follows. Catalyzes the phosphorylation of ribose 1,5-bisphosphate to 5-phospho-D-ribosyl alpha-1-diphosphate (PRPP). This chain is Ribose 1,5-bisphosphate phosphokinase PhnN, found in Burkholderia mallei (strain SAVP1).